A 124-amino-acid chain; its full sequence is Large ribosomal subunit protein bL12 (124 aa).

It belongs to the bacterial ribosomal protein bL12 family. Homodimer. Part of the ribosomal stalk of the 50S ribosomal subunit. Forms a multimeric L10(L12)X complex, where L10 forms an elongated spine to which 2 to 4 L12 dimers bind in a sequential fashion. Binds GTP-bound translation factors.

Its function is as follows. Forms part of the ribosomal stalk which helps the ribosome interact with GTP-bound translation factors. Is thus essential for accurate translation. The chain is Large ribosomal subunit protein bL12 from Allorhizobium ampelinum (strain ATCC BAA-846 / DSM 112012 / S4) (Agrobacterium vitis (strain S4)).